A 418-amino-acid chain; its full sequence is MTLLALGINHKTAPVSLRERVVFSQDKLGVALDSLLQQPLVQGGVVLSTCNRTELYLSVDEQENQREQLIRWLCEYHQLRPEEVNSSLYWHQGNAAVSHLMRVASGLDSLVLGEPQILGQVKKAFAESQRGHSLSSELERLFQKSFTVAKRVRTETDIGASAVSVAFAACTLARQIFESLADVTVLLVGAGETIELVARYLRDHNVQKMVIANRTRERAQALATEVGAEVITLAELDEQLVHADIVISSTASTLPIIGKGMMERTLKARRNQPMLMVDIAVPRDIEPEVGKLPNVYLYSVDDLHAIIQHNLAQRKAAAVQAESIVQQESSDFMAWLRAQSAVETIRDYRAQADELRAEMTAKALAAIQQGNDVEAVIQELTHRLTNRLIHAPTKSLQQAARDGDQNRLQILRDSLGLD.

Substrate contacts are provided by residues 49–52, serine 109, 114–116, and glutamine 120; these read TCNR and EPQ. Cysteine 50 functions as the Nucleophile in the catalytic mechanism. 189-194 contributes to the NADP(+) binding site; sequence GAGETI.

Belongs to the glutamyl-tRNA reductase family. In terms of assembly, homodimer.

The enzyme catalyses (S)-4-amino-5-oxopentanoate + tRNA(Glu) + NADP(+) = L-glutamyl-tRNA(Glu) + NADPH + H(+). It participates in porphyrin-containing compound metabolism; protoporphyrin-IX biosynthesis; 5-aminolevulinate from L-glutamyl-tRNA(Glu): step 1/2. Functionally, catalyzes the NADPH-dependent reduction of glutamyl-tRNA(Glu) to glutamate 1-semialdehyde (GSA). This is Glutamyl-tRNA reductase from Pectobacterium atrosepticum (strain SCRI 1043 / ATCC BAA-672) (Erwinia carotovora subsp. atroseptica).